The primary structure comprises 404 residues: Corticosteroid-binding globulin (404 aa).

The N-terminal stretch at 1 to 22 (MLPTLYTCLLWLSTSGLWTVQA) is a signal peptide. N-linked (GlcNAc...) asparagine glycosylation is found at N95, N119, and N175. A cortisol-binding site is contributed by Q253. N259 carries an N-linked (GlcNAc...) asparagine glycan. Q285 is a binding site for cortisol. A glycan (N-linked (GlcNAc...) asparagine) is linked at N326. Position 392 (W392) interacts with cortisol.

It belongs to the serpin family. In terms of processing, glycosylation in position Asn-259 is needed for steroid binding.

The protein localises to the secreted. In terms of biological role, major transport protein for glucocorticoids and progestins in the blood of almost all vertebrate species. This Bos taurus (Bovine) protein is Corticosteroid-binding globulin (SERPINA6).